The primary structure comprises 446 residues: tRNA modification GTPase MnmE (446 aa).

Positions 23, 81, and 120 each coordinate (6S)-5-formyl-5,6,7,8-tetrahydrofolate. One can recognise a TrmE-type G domain in the interval 216–370 (GFKVAIIGKP…LIKELELILD (155 aa)). Asn-226 provides a ligand contact to K(+). Residues 226-231 (NVGKSS), 245-251 (SDIAGTT), and 270-273 (DTAG) contribute to the GTP site. Ser-230 provides a ligand contact to Mg(2+). Residues Ser-245, Ile-247, and Thr-250 each coordinate K(+). Thr-251 provides a ligand contact to Mg(2+). Lys-446 is a binding site for (6S)-5-formyl-5,6,7,8-tetrahydrofolate.

This sequence belongs to the TRAFAC class TrmE-Era-EngA-EngB-Septin-like GTPase superfamily. TrmE GTPase family. Homodimer. Heterotetramer of two MnmE and two MnmG subunits. K(+) serves as cofactor.

Its subcellular location is the cytoplasm. Its function is as follows. Exhibits a very high intrinsic GTPase hydrolysis rate. Involved in the addition of a carboxymethylaminomethyl (cmnm) group at the wobble position (U34) of certain tRNAs, forming tRNA-cmnm(5)s(2)U34. The protein is tRNA modification GTPase MnmE of Aliarcobacter butzleri (strain RM4018) (Arcobacter butzleri).